The sequence spans 467 residues: Probable protein phosphatase 2C 55 (467 aa).

The 237-residue stretch at 222–458 folds into the PPM-type phosphatase domain; it reads SCYLPHPDKE…DDITVVVSYV (237 aa). 4 residues coordinate Mn(2+): aspartate 252, glycine 253, aspartate 383, and aspartate 449.

Belongs to the PP2C family. It depends on Mg(2+) as a cofactor. Requires Mn(2+) as cofactor.

It catalyses the reaction O-phospho-L-seryl-[protein] + H2O = L-seryl-[protein] + phosphate. The enzyme catalyses O-phospho-L-threonyl-[protein] + H2O = L-threonyl-[protein] + phosphate. The polypeptide is Probable protein phosphatase 2C 55 (Arabidopsis thaliana (Mouse-ear cress)).